A 509-amino-acid chain; its full sequence is MAALGGLTHSRTLFVDDDGTPMSFYVPPGPLKRQLYPLITHGGGEMCRMQQPGALLLSAPGSAQGAQYVSTAYIMDCVRIDKLLDVDDYRLDGSHGRPRKSQGSKKEERAPQQKVGESSQESDQKQQAKVGGDLEEGDKLSDPGEPVNEESLGSVSSTRKKENKMDCSEAQKIGSLKSARIHQTRRNVFTEKEDVAIMLYVRENAPHRGTGVSLWKEMEQKQVVKRTWQAIKNRYFRYLKGKRNYVLPLTDDSSSQEPSDDEEECPQPITKKSRISDSTPCTEKPGVAEKTGEKLSTDTSVEGPSTEKSDAAKTSNVNLPVEERGQEVTEGAIKRSEGNKKSTEMNEEAVSASSKENQDDGADLHIFEIANLEFEVEDTPELEVPKRSFGLKEFVMGEDLPSSQSQTQVDEVSSSPDASESEGLQEALLSMMSEFKLSLCDVTQALLKNNGELAATRHFLQTGSRPDGYPIWVRKDDLDLQKDDAETLKRLIQKYGADNVAKRVAFLAS.

In terms of domain architecture, BRCT spans 1-91 (MAALGGLTHS…KLLDVDDYRL (91 aa)). Positions 93–168 (GSHGRPRKSQ…RKKENKMDCS (76 aa)) are disordered. The segment covering 115–127 (VGESSQESDQKQQ) has biased composition (polar residues). Residues 159–168 (RKKENKMDCS) are compositionally biased toward basic and acidic residues. The 55-residue stretch at 185–239 (RRNVFTEKEDVAIMLYVRENAPHRGTGVSLWKEMEQKQVVKRTWQAIKNRYFRYL) folds into the Myb-like domain. Disordered stretches follow at residues 249–359 (LTDD…ENQD) and 399–423 (DLPS…ESEG). 2 stretches are compositionally biased toward basic and acidic residues: residues 286-296 (GVAEKTGEKLS) and 321-344 (VEER…KSTE). The segment covering 401 to 418 (PSSQSQTQVDEVSSSPDA) has biased composition (polar residues). The Nuclear localization signal motif lies at 493–509 (QKYGADNVAKRVAFLAS).

The protein belongs to the RAP1 family. In terms of assembly, homodimer. Component of the shelterin complex (telosome). Interacts with terf2; the interaction is direct.

Its subcellular location is the nucleus. The protein resides in the chromosome. It localises to the telomere. In terms of biological role, acts both as a regulator of telomere function and as a transcription regulator. Involved in the regulation of telomere length and protection as a component of the shelterin complex (telosome). Does not bind DNA directly: recruited to telomeric double-stranded 5'-TTAGGG-3' repeats via its interaction with terf2. Independently of its function in telomeres, also acts as a transcription regulator: recruited to extratelomeric 5'-TTAGGG-3' sites via its association with terf2 or other factors, and regulates gene expression. The sequence is that of Telomeric repeat-binding factor 2-interacting protein 1 (terf2ip) from Xenopus tropicalis (Western clawed frog).